The primary structure comprises 55 residues: Large ribosomal subunit protein bL33 (55 aa).

The protein belongs to the bacterial ribosomal protein bL33 family.

This chain is Large ribosomal subunit protein bL33, found in Ruegeria sp. (strain TM1040) (Silicibacter sp.).